Reading from the N-terminus, the 88-residue chain is Phosphoribosyl-ATP pyrophosphatase (88 aa).

The protein belongs to the PRA-PH family.

It localises to the cytoplasm. The catalysed reaction is 1-(5-phospho-beta-D-ribosyl)-ATP + H2O = 1-(5-phospho-beta-D-ribosyl)-5'-AMP + diphosphate + H(+). It functions in the pathway amino-acid biosynthesis; L-histidine biosynthesis; L-histidine from 5-phospho-alpha-D-ribose 1-diphosphate: step 2/9. The polypeptide is Phosphoribosyl-ATP pyrophosphatase (Cutibacterium acnes (strain DSM 16379 / KPA171202) (Propionibacterium acnes)).